A 540-amino-acid chain; its full sequence is MKTPEAPPLAPDCLPSDQAPAPARLSRQASPMDKNTDPELMPTPRDGDDPPQVSSDPMVGLALSQELEEGVPASLPTPLESGFGSPSELSSRVEEKELSENVSLPAEETNRPELGPGEDVEGVSEELTPEDEGYTIWNYNFSQVPRFLSGSWSEFITQPENFLKGCKWAPDGSCILTNSADNILRIYNLPPELYNEGEQLEYAEMAPVLRMVEGDTIYDYCWYSLMSSAQPDTSYVASSSRENPIHIWDAFTGELRASFRSYNHLDELTAAHSLCFSPDGSQLFCGFNRTVRVFSTSRPGRDCEVRTTFAKRQGQSGIISCIAFSPTQPLYACGSYGRSLGLYTWEDGSPLALLGGHQGGITHLCFHPDGNCFFSGARKDAELLCWDLRQLGHPLWSLSREVTTNQRIYFDLDPTGQFLVSGSTSGAVSVWDTGGAGLESKPEPVLSFQPQKDCTNGVSLHPSLPLLATASGQRVFPEPTESGDEREEEVDLPLLSMRHVHLECQLQLWWCGGGPDTSISDAHQEEMGQGRTEGGGGEFT.

Residues 1-10 are compositionally biased toward pro residues; the sequence is MKTPEAPPLA. Residues 1–126 are disordered; the sequence is MKTPEAPPLA…GEDVEGVSEE (126 aa). Phosphoserine is present on residues Ser-26, Ser-30, Ser-54, Ser-64, Ser-85, and Ser-90. Positions 116–126 are enriched in acidic residues; sequence PGEDVEGVSEE. WD repeat units lie at residues 158–197, 213–258, 263–304, 314–355, 356–396, and 402–441; these read QPEN…YNEG, EGDT…LRAS, NHLD…RDCE, GQSG…ALLG, GHQG…HPLW, and VTTN…LESK. Position 480 is a phosphothreonine (Thr-480). Ser-482 bears the Phosphoserine mark. The tract at residues 520–540 is disordered; the sequence is SDAHQEEMGQGRTEGGGGEFT. Over residues 531-540 the composition is skewed to gly residues; sequence RTEGGGGEFT.

Belongs to the TCAB1 family. Component of the telomerase holoenzyme complex composed of one molecule of TERT, one molecule of WRAP53/TCAB1, two molecules of H/ACA ribonucleoprotein complex subunits DKC1, NOP10, NHP2 and GAR1, and a telomerase RNA template component (TERC). The telomerase holoenzyme complex is associated with TEP1, SMG6/EST1A and POT1. Interacts with the chaperonin-containing T-complex (TRiC) complex; which mediates the folding of WRAP53/TCAB1. Interacts with COIL. Interacts with SMN1. Interacts with RNF8. Interacts with histone H2AX. Phosphorylated at Ser-64 by ATM in response to DNA damage, promoting its interaction with histone H2AX and localization to sites of DNA double-strand breaks.

It is found in the nucleus. The protein localises to the cajal body. Its subcellular location is the chromosome. The protein resides in the telomere. In terms of biological role, RNA chaperone that plays a key role in telomere maintenance and RNA localization to Cajal bodies. Specifically recognizes and binds the Cajal body box (CAB box) present in both small Cajal body RNAs (scaRNAs) and telomerase RNA template component (TERC). Essential component of the telomerase holoenzyme complex, a ribonucleoprotein complex essential for the replication of chromosome termini that elongates telomeres in most eukaryotes. In the telomerase holoenzyme complex, required to stimulate the catalytic activity of the complex. Acts by specifically binding the CAB box of the TERC RNA and controlling the folding of the CR4/CR5 region of the TERC RNA, a critical step for telomerase activity. In addition, also controls telomerase holoenzyme complex localization to Cajal body. During S phase, required for delivery of TERC to telomeres during S phase and for telomerase activity. In addition to its role in telomere maintenance, also required for Cajal body formation, probably by mediating localization of scaRNAs to Cajal bodies. Also plays a role in DNA repair: phosphorylated by ATM in response to DNA damage and relocalizes to sites of DNA double-strand breaks to promote the repair of DNA double-strand breaks. Acts by recruiting the ubiquitin ligase RNF8 to DNA breaks and promote both homologous recombination (HR) and non-homologous end joining (NHEJ). This chain is Telomerase Cajal body protein 1, found in Bos taurus (Bovine).